The following is a 319-amino-acid chain: Acetyl-coenzyme A carboxylase carboxyl transferase subunit alpha (319 aa).

The 254-residue stretch at 43–296 (LKQKSVELTQ…KTQLLLDLVE (254 aa)) folds into the CoA carboxyltransferase C-terminal domain.

The protein belongs to the AccA family. As to quaternary structure, acetyl-CoA carboxylase is a heterohexamer composed of biotin carboxyl carrier protein (AccB), biotin carboxylase (AccC) and two subunits each of ACCase subunit alpha (AccA) and ACCase subunit beta (AccD).

The protein localises to the cytoplasm. It carries out the reaction N(6)-carboxybiotinyl-L-lysyl-[protein] + acetyl-CoA = N(6)-biotinyl-L-lysyl-[protein] + malonyl-CoA. It participates in lipid metabolism; malonyl-CoA biosynthesis; malonyl-CoA from acetyl-CoA: step 1/1. Functionally, component of the acetyl coenzyme A carboxylase (ACC) complex. First, biotin carboxylase catalyzes the carboxylation of biotin on its carrier protein (BCCP) and then the CO(2) group is transferred by the carboxyltransferase to acetyl-CoA to form malonyl-CoA. The protein is Acetyl-coenzyme A carboxylase carboxyl transferase subunit alpha of Blochmanniella floridana.